Here is a 186-residue protein sequence, read N- to C-terminus: dCTP deaminase (186 aa).

Residue 107–112 participates in dCTP binding; the sequence is KSTYAR. The active-site Proton donor/acceptor is glutamate 133. The dCTP site is built by glutamine 152, tyrosine 166, and glutamine 176.

Belongs to the dCTP deaminase family. Homotrimer.

It carries out the reaction dCTP + H2O + H(+) = dUTP + NH4(+). It functions in the pathway pyrimidine metabolism; dUMP biosynthesis; dUMP from dCTP (dUTP route): step 1/2. Catalyzes the deamination of dCTP to dUTP. This chain is dCTP deaminase, found in Campylobacter jejuni subsp. jejuni serotype O:6 (strain 81116 / NCTC 11828).